Reading from the N-terminus, the 154-residue chain is MNIIEGKLNLDSNTKIAIINARFNHIITDRLVEGAKDAFLRHGGKEENLSLILVPGAFELPYALKKAIESKKFDAICCVGAVIRGSTPHFDYVSAETTKGIANVSLNHNIPVSFGVLTTDTIEQAIERAGSKAGNKGFEAMTTVIEMLNLSKEL.

Residues Phe23, 57-59 (AFE), and 81-83 (AVI) contribute to the 5-amino-6-(D-ribitylamino)uracil site. 86 to 87 (ST) serves as a coordination point for (2S)-2-hydroxy-3-oxobutyl phosphate. The Proton donor role is filled by His89. Phe114 serves as a coordination point for 5-amino-6-(D-ribitylamino)uracil. Residue Arg128 participates in (2S)-2-hydroxy-3-oxobutyl phosphate binding.

This sequence belongs to the DMRL synthase family.

The enzyme catalyses (2S)-2-hydroxy-3-oxobutyl phosphate + 5-amino-6-(D-ribitylamino)uracil = 6,7-dimethyl-8-(1-D-ribityl)lumazine + phosphate + 2 H2O + H(+). It functions in the pathway cofactor biosynthesis; riboflavin biosynthesis; riboflavin from 2-hydroxy-3-oxobutyl phosphate and 5-amino-6-(D-ribitylamino)uracil: step 1/2. Its function is as follows. Catalyzes the formation of 6,7-dimethyl-8-ribityllumazine by condensation of 5-amino-6-(D-ribitylamino)uracil with 3,4-dihydroxy-2-butanone 4-phosphate. This is the penultimate step in the biosynthesis of riboflavin. This Campylobacter jejuni subsp. jejuni serotype O:2 (strain ATCC 700819 / NCTC 11168) protein is 6,7-dimethyl-8-ribityllumazine synthase.